A 29-amino-acid polypeptide reads, in one-letter code: Pyridoxal 5'-phosphate synthase subunit PdxS (29 aa).

It belongs to the PdxS/SNZ family. In the presence of PdxT, forms a dodecamer of heterodimers.

The catalysed reaction is aldehydo-D-ribose 5-phosphate + D-glyceraldehyde 3-phosphate + L-glutamine = pyridoxal 5'-phosphate + L-glutamate + phosphate + 3 H2O + H(+). It functions in the pathway cofactor biosynthesis; pyridoxal 5'-phosphate biosynthesis. Its function is as follows. Catalyzes the formation of pyridoxal 5'-phosphate from ribose 5-phosphate (RBP), glyceraldehyde 3-phosphate (G3P) and ammonia. The ammonia is provided by the PdxT subunit. Can also use ribulose 5-phosphate and dihydroxyacetone phosphate as substrates, resulting from enzyme-catalyzed isomerization of RBP and G3P, respectively. This Clostridium pasteurianum protein is Pyridoxal 5'-phosphate synthase subunit PdxS.